A 60-amino-acid polypeptide reads, in one-letter code: Short neurotoxin C (60 aa).

Intrachain disulfides connect C3/C22, C17/C39, C41/C52, and C53/C58.

It belongs to the three-finger toxin family. Short-chain subfamily. Type I alpha-neurotoxin sub-subfamily. Expressed by the venom gland.

It is found in the secreted. Binds to muscle nicotinic acetylcholine receptor (nAChR) and inhibit acetylcholine from binding to the receptor, thereby impairing neuromuscular transmission. The chain is Short neurotoxin C from Aipysurus laevis (Olive sea snake).